The sequence spans 165 residues: Phosphopantetheine adenylyltransferase (165 aa).

Ser10 contributes to the substrate binding site. Residues 10 to 11 and His18 each bind ATP; that span reads SF. Substrate is bound by residues Lys42, Leu74, and Arg88. Residues 89-91, Glu99, and 124-130 each bind ATP; these read GLR and WFYTSST.

This sequence belongs to the bacterial CoaD family. Homohexamer. Requires Mg(2+) as cofactor.

The protein localises to the cytoplasm. The catalysed reaction is (R)-4'-phosphopantetheine + ATP + H(+) = 3'-dephospho-CoA + diphosphate. It participates in cofactor biosynthesis; coenzyme A biosynthesis; CoA from (R)-pantothenate: step 4/5. Reversibly transfers an adenylyl group from ATP to 4'-phosphopantetheine, yielding dephospho-CoA (dPCoA) and pyrophosphate. This Syntrophus aciditrophicus (strain SB) protein is Phosphopantetheine adenylyltransferase.